The following is a 350-amino-acid chain: N-acetyl-gamma-glutamyl-phosphate reductase (350 aa).

Residue Cys-153 is part of the active site.

The protein belongs to the NAGSA dehydrogenase family. Type 1 subfamily.

The protein localises to the cytoplasm. It carries out the reaction N-acetyl-L-glutamate 5-semialdehyde + phosphate + NADP(+) = N-acetyl-L-glutamyl 5-phosphate + NADPH + H(+). Its pathway is amino-acid biosynthesis; L-arginine biosynthesis; N(2)-acetyl-L-ornithine from L-glutamate: step 3/4. Catalyzes the NADPH-dependent reduction of N-acetyl-5-glutamyl phosphate to yield N-acetyl-L-glutamate 5-semialdehyde. The chain is N-acetyl-gamma-glutamyl-phosphate reductase from Gloeobacter violaceus (strain ATCC 29082 / PCC 7421).